The sequence spans 671 residues: DNA ligase (671 aa).

NAD(+)-binding positions include 35 to 39, 84 to 85, and E113; these read DQQYD and SL. Catalysis depends on K115, which acts as the N6-AMP-lysine intermediate. R136, E170, K285, and K309 together coordinate NAD(+). C403, C406, C421, and C426 together coordinate Zn(2+). The BRCT domain occupies 588–671; the sequence is TTQTIFTNKK…QIIENSQIKL (84 aa).

It belongs to the NAD-dependent DNA ligase family. LigA subfamily. Mg(2+) serves as cofactor. It depends on Mn(2+) as a cofactor.

The catalysed reaction is NAD(+) + (deoxyribonucleotide)n-3'-hydroxyl + 5'-phospho-(deoxyribonucleotide)m = (deoxyribonucleotide)n+m + AMP + beta-nicotinamide D-nucleotide.. In terms of biological role, DNA ligase that catalyzes the formation of phosphodiester linkages between 5'-phosphoryl and 3'-hydroxyl groups in double-stranded DNA using NAD as a coenzyme and as the energy source for the reaction. It is essential for DNA replication and repair of damaged DNA. This chain is DNA ligase, found in Onion yellows phytoplasma (strain OY-M).